A 113-amino-acid polypeptide reads, in one-letter code: 4-cresol dehydrogenase [hydroxylating] cytochrome c subunit (113 aa).

The first 33 residues, 1–33 (MTFPFSGAAVKRMLVTGVVLPFGLLVAAGQAQA), serve as a signal peptide directing secretion. Cys-48, Cys-51, His-52, and Met-83 together coordinate heme c.

As to quaternary structure, tetramer of two cytochrome subunits and two flavoprotein subunits. In terms of processing, binds 1 heme c group covalently per subunit.

Its pathway is aromatic compound metabolism; p-cresol degradation. Its function is as follows. This is the heme-containing component of the p-cresol methylhydroxylase. It accepts electrons from the flavoprotein subunit. This is 4-cresol dehydrogenase [hydroxylating] cytochrome c subunit (pchC) from Pseudomonas putida (Arthrobacter siderocapsulatus).